Reading from the N-terminus, the 607-residue chain is Cytosolic Fe-S cluster assembly factor NAR1 (607 aa).

Cys-20, Cys-82, Cys-85, Cys-88, Cys-204, and Cys-259 together coordinate [4Fe-4S] cluster. A disordered region spans residues 430–476 (KPNTGKSTNTTTTTTKSKVNPLAARRRARIANNRGKPETKSTSEVNS). Positions 432 to 447 (NTGKSTNTTTTTTKSK) are enriched in low complexity. [4Fe-4S] cluster-binding residues include Cys-496 and Cys-500.

It belongs to the NARF family.

Its function is as follows. Component of the cytosolic Fe/S protein assembly machinery. Required for maturation of extramitochondrial Fe/S proteins. May play a role in the transfer of pre-assembled Fe/S clusters to target apoproteins. This Candida albicans (strain SC5314 / ATCC MYA-2876) (Yeast) protein is Cytosolic Fe-S cluster assembly factor NAR1 (NAR1).